Here is a 236-residue protein sequence, read N- to C-terminus: Mitochondrial inner membrane protease ATP23 (236 aa).

An a divalent metal cation-binding site is contributed by histidine 136. The active site involves glutamate 137. Histidine 140 contacts a divalent metal cation.

The protein belongs to the peptidase M76 family.

It localises to the mitochondrion inner membrane. In terms of biological role, has a dual role in the assembly of mitochondrial ATPase. Acts as a protease that removes N-terminal residues of mitochondrial ATPase CF(0) subunit 6 at the intermembrane space side. Also involved in the correct assembly of the membrane-embedded ATPase CF(0) particle, probably mediating association of subunit 6 with the subunit 9 ring. This is Mitochondrial inner membrane protease ATP23 (ATP23) from Debaryomyces hansenii (strain ATCC 36239 / CBS 767 / BCRC 21394 / JCM 1990 / NBRC 0083 / IGC 2968) (Yeast).